The following is a 1057-amino-acid chain: Probable E3 ubiquitin-protein ligase HERC4 (1057 aa).

7 RCC1 repeats span residues 1-51 (MLCW…FVLD), 52-101 (DGTV…ALND), 102-154 (KGQV…ALSK), 156-207 (SEVF…VLTL), 208-259 (SGAI…ALTK), 261-311 (GGVF…AFVP), and 313-368 (SGRI…KRIF). One can recognise an HECT domain in the interval 730–1057 (KNIDYKKPLK…IDHNEGFSLI (328 aa)). Cys1025 functions as the Glycyl thioester intermediate in the catalytic mechanism.

Expressed in brain and testis and detected in heart and placenta.

The protein localises to the cytoplasm. Its subcellular location is the cytosol. The catalysed reaction is S-ubiquitinyl-[E2 ubiquitin-conjugating enzyme]-L-cysteine + [acceptor protein]-L-lysine = [E2 ubiquitin-conjugating enzyme]-L-cysteine + N(6)-ubiquitinyl-[acceptor protein]-L-lysine.. The protein operates within protein modification; protein ubiquitination. Its function is as follows. Probable E3 ubiquitin-protein ligase involved in either protein trafficking or in the distribution of cellular structures. Required for spermatozoon maturation and fertility, and for the removal of the cytoplasmic droplet of the spermatozoon. E3 ubiquitin-protein ligases accept ubiquitin from an E2 ubiquitin-conjugating enzyme in the form of a thioester and then directly transfer it to targeted substrates. This is Probable E3 ubiquitin-protein ligase HERC4 (HERC4) from Homo sapiens (Human).